A 396-amino-acid chain; its full sequence is Putative peptide chain release factor 1, mitochondrial (396 aa).

An N5-methylglutamine modification is found at Gln-270.

Belongs to the prokaryotic/mitochondrial release factor family. In terms of processing, methylation of glutamine in the GGQ triplet is conserved from bacteria to mammals.

The protein resides in the mitochondrion. This chain is Putative peptide chain release factor 1, mitochondrial, found in Schizosaccharomyces pombe (strain 972 / ATCC 24843) (Fission yeast).